The sequence spans 259 residues: Glutamate 5-kinase (259 aa).

Residue lysine 18 coordinates ATP. Substrate contacts are provided by serine 54, aspartate 141, and asparagine 153. 173–174 is an ATP binding site; the sequence is SD.

The protein belongs to the glutamate 5-kinase family.

Its subcellular location is the cytoplasm. The enzyme catalyses L-glutamate + ATP = L-glutamyl 5-phosphate + ADP. It functions in the pathway amino-acid biosynthesis; L-proline biosynthesis; L-glutamate 5-semialdehyde from L-glutamate: step 1/2. Catalyzes the transfer of a phosphate group to glutamate to form L-glutamate 5-phosphate. This Clavibacter sepedonicus (Clavibacter michiganensis subsp. sepedonicus) protein is Glutamate 5-kinase.